We begin with the raw amino-acid sequence, 690 residues long: Elongation factor G (690 aa).

Positions 8–283 (EDYRNFGIMA…AVVDYLPSPI (276 aa)) constitute a tr-type G domain. Residues 17-24 (AHIDAGKT), 81-85 (DTPGH), and 135-138 (NKMD) each bind GTP.

This sequence belongs to the TRAFAC class translation factor GTPase superfamily. Classic translation factor GTPase family. EF-G/EF-2 subfamily.

It is found in the cytoplasm. Catalyzes the GTP-dependent ribosomal translocation step during translation elongation. During this step, the ribosome changes from the pre-translocational (PRE) to the post-translocational (POST) state as the newly formed A-site-bound peptidyl-tRNA and P-site-bound deacylated tRNA move to the P and E sites, respectively. Catalyzes the coordinated movement of the two tRNA molecules, the mRNA and conformational changes in the ribosome. This Bradyrhizobium diazoefficiens (strain JCM 10833 / BCRC 13528 / IAM 13628 / NBRC 14792 / USDA 110) protein is Elongation factor G.